A 240-amino-acid polypeptide reads, in one-letter code: MGQPKYKRVILKISGEALAGNQGFGIDQEVITSIASQIKEVRELGVDVAIVVGGGNIWRGVKGSARGMDRATADYMGMLATVINSLALQDALENQGVDTRVQTAIEMRQIAEPYIRRRAIRHLEKGRVVIFAAGTGNPYFSTDTTAALRAAELEADVILMAKRVDGVYDSDPEINPEAKRLKDLDYLTVLNGGLGVMDSTATSLCMDNHIPIIVFGIKEKGNILKAILGEPIGTYVGRLE.

Position 12 to 15 (12 to 15 (KISG)) interacts with ATP. Residues 20–25 (GNQGFG) are involved in allosteric activation by GTP. Residue G54 participates in UMP binding. ATP contacts are provided by G55 and R59. Residues D74 and 135 to 142 (TGNPYFST) each bind UMP. The ATP site is built by Y168 and D171.

Belongs to the UMP kinase family. Homohexamer.

It is found in the cytoplasm. The enzyme catalyses UMP + ATP = UDP + ADP. It functions in the pathway pyrimidine metabolism; CTP biosynthesis via de novo pathway; UDP from UMP (UMPK route): step 1/1. Its activity is regulated as follows. Allosterically activated by GTP. Inhibited by UTP. Catalyzes the reversible phosphorylation of UMP to UDP. The chain is Uridylate kinase from Moorella thermoacetica (strain ATCC 39073 / JCM 9320).